Consider the following 106-residue polypeptide: UPF0145 protein PSEEN3024 (106 aa).

It belongs to the UPF0145 family.

In Pseudomonas entomophila (strain L48), this protein is UPF0145 protein PSEEN3024.